Here is a 59-residue protein sequence, read N- to C-terminus: Large ribosomal subunit protein bL32 (59 aa).

The interval 1–59 is disordered; the sequence is MAVQQNKKSPSKRGMHRSHDALTAPALFVDSTTGEVHRPHHISPNGMYRGRKVVKAKGE. Residues 49-59 show a composition bias toward basic residues; it reads RGRKVVKAKGE.

It belongs to the bacterial ribosomal protein bL32 family.

This is Large ribosomal subunit protein bL32 from Neisseria gonorrhoeae (strain ATCC 700825 / FA 1090).